The chain runs to 372 residues: 18-hydroxynorfluorocurarine reductase (372 aa).

Zn(2+) is bound by residues Cys-47, Asp-50, His-69, Glu-70, Cys-100, Cys-103, Cys-106, Cys-114, and Cys-172. Residues 197–202, Lys-226, 283–285, Ser-307, and Arg-354 each bind NADP(+); these read GLGGIG and LGA.

This sequence belongs to the zinc-containing alcohol dehydrogenase family. Homodimer. Zn(2+) is required as a cofactor. Mainly expressed in roots.

It carries out the reaction (19E)-cur-19-en-17-al + NADP(+) = norfluorocurarine + NADPH + H(+). The enzyme catalyses 17,18-epoxy-17-hydroxycur-19-ene + NADP(+) = 18-hydroxynorfluorocurarine + NADPH + H(+). Its pathway is alkaloid biosynthesis. Functionally, alcohol dehydrogenase involved in the biosynthesis of curare monoterpene indole alkaloids (MIAs), natural products such as strychnine, a neurotoxic compound used as a pesticide to control rodents, and its pharmacologically active derivatives, including brucine, used to regulate blood pressure. Curare alkaloids act as animal glycine receptor antagonists. Catalyzes the conversion of norfluorocurarine to desoxy Wieland-Gumlich aldehyde, and of 18-OH norfluorocurarine to Wieland-Gumlich aldehyde. The sequence is that of 18-hydroxynorfluorocurarine reductase from Strychnos nux-vomica (Poison nut).